Here is a 295-residue protein sequence, read N- to C-terminus: Pyridoxal 5'-phosphate synthase subunit PdxS (295 aa).

A D-ribose 5-phosphate-binding site is contributed by D25. The active-site Schiff-base intermediate with D-ribose 5-phosphate is the K82. G154 provides a ligand contact to D-ribose 5-phosphate. R166 is a D-glyceraldehyde 3-phosphate binding site. D-ribose 5-phosphate-binding positions include G215 and 236 to 237 (GS).

The protein belongs to the PdxS/SNZ family. In the presence of PdxT, forms a dodecamer of heterodimers.

The enzyme catalyses aldehydo-D-ribose 5-phosphate + D-glyceraldehyde 3-phosphate + L-glutamine = pyridoxal 5'-phosphate + L-glutamate + phosphate + 3 H2O + H(+). Its pathway is cofactor biosynthesis; pyridoxal 5'-phosphate biosynthesis. Catalyzes the formation of pyridoxal 5'-phosphate from ribose 5-phosphate (RBP), glyceraldehyde 3-phosphate (G3P) and ammonia. The ammonia is provided by the PdxT subunit. Can also use ribulose 5-phosphate and dihydroxyacetone phosphate as substrates, resulting from enzyme-catalyzed isomerization of RBP and G3P, respectively. The protein is Pyridoxal 5'-phosphate synthase subunit PdxS of Staphylococcus haemolyticus (strain JCSC1435).